The chain runs to 258 residues: L-rhamnose-1-dehydrogenase (258 aa).

NADP(+) is bound by residues isoleucine 19, aspartate 68, and asparagine 95. Catalysis depends on proton donor residues serine 147 and tyrosine 161. NADP(+) is bound by residues tyrosine 161, lysine 165, isoleucine 194, and threonine 196. Lysine 165 serves as the catalytic Lowers pKa of active site Tyr.

It belongs to the short-chain dehydrogenases/reductases (SDR) family.

It catalyses the reaction L-rhamnofuranose + NAD(+) = L-rhamnono-1,4-lactone + NADH + H(+). NAD-dependent dehydrogenase that has high activity with L-rhamnose and L-lyxose, and shows only low activity with L-mannose. Has no activity with NADP. Catalyzes the first step in an alternative pathway for rhamnose utilization that does not involve phosphorylated intermediates. In Scheffersomyces stipitis (strain ATCC 58785 / CBS 6054 / NBRC 10063 / NRRL Y-11545) (Yeast), this protein is L-rhamnose-1-dehydrogenase (DHG2).